Reading from the N-terminus, the 457-residue chain is Mesentericin Y105 secretion protein MesE (457 aa).

Residues 22-42 form a helical membrane-spanning segment; that stretch reads TLIIVPIFLLVVFIVLFSLFA.

The protein belongs to the membrane fusion protein (MFP) (TC 8.A.1) family.

The protein localises to the membrane. Involved in the secretion of mesentericin Y105. The sequence is that of Mesentericin Y105 secretion protein MesE (mesE) from Leuconostoc mesenteroides.